Here is a 359-residue protein sequence, read N- to C-terminus: Protein RecA (359 aa).

64–71 (GHESSGKT) is an ATP binding site. Positions 328–359 (NKYPNKDSNDSPKEGSKIKTKVNPAVTQDELI) are disordered. Basic and acidic residues predominate over residues 331-344 (PNKDSNDSPKEGSK).

The protein belongs to the RecA family.

It localises to the cytoplasm. Can catalyze the hydrolysis of ATP in the presence of single-stranded DNA, the ATP-dependent uptake of single-stranded DNA by duplex DNA, and the ATP-dependent hybridization of homologous single-stranded DNAs. It interacts with LexA causing its activation and leading to its autocatalytic cleavage. The protein is Protein RecA of Francisella tularensis subsp. novicida (strain U112).